Here is a 228-residue protein sequence, read N- to C-terminus: Cytochrome c oxidase subunit 2 (228 aa).

Residues 1-14 are Mitochondrial intermembrane-facing; sequence MAYPFQLGFQDATS. Residues 15-45 form a helical membrane-spanning segment; the sequence is PIMEELLHFHDHTLMIVFLISSLVLYIISLM. Residues 46 to 59 lie on the Mitochondrial matrix side of the membrane; the sequence is LTTKLTHTSTMDAQ. Residues 60-87 form a helical membrane-spanning segment; the sequence is EVETIWTILPAIILILIALPSLRILYMM. Over 88–228 the chain is Mitochondrial intermembrane; the sequence is DEINNPALTV…FEKWSTSMLT (141 aa). Positions 161, 196, 198, 200, 204, and 207 each coordinate Cu cation. Glu198 contributes to the Mg(2+) binding site. The residue at position 218 (Tyr218) is a Phosphotyrosine.

This sequence belongs to the cytochrome c oxidase subunit 2 family. In terms of assembly, component of the cytochrome c oxidase (complex IV, CIV), a multisubunit enzyme composed of 14 subunits. The complex is composed of a catalytic core of 3 subunits MT-CO1, MT-CO2 and MT-CO3, encoded in the mitochondrial DNA, and 11 supernumerary subunits COX4I, COX5A, COX5B, COX6A, COX6B, COX6C, COX7A, COX7B, COX7C, COX8 and NDUFA4, which are encoded in the nuclear genome. The complex exists as a monomer or a dimer and forms supercomplexes (SCs) in the inner mitochondrial membrane with NADH-ubiquinone oxidoreductase (complex I, CI) and ubiquinol-cytochrome c oxidoreductase (cytochrome b-c1 complex, complex III, CIII), resulting in different assemblies (supercomplex SCI(1)III(2)IV(1) and megacomplex MCI(2)III(2)IV(2)). Found in a complex with TMEM177, COA6, COX18, COX20, SCO1 and SCO2. Interacts with TMEM177 in a COX20-dependent manner. Interacts with COX20. Interacts with COX16. Cu cation serves as cofactor.

Its subcellular location is the mitochondrion inner membrane. The catalysed reaction is 4 Fe(II)-[cytochrome c] + O2 + 8 H(+)(in) = 4 Fe(III)-[cytochrome c] + 2 H2O + 4 H(+)(out). Component of the cytochrome c oxidase, the last enzyme in the mitochondrial electron transport chain which drives oxidative phosphorylation. The respiratory chain contains 3 multisubunit complexes succinate dehydrogenase (complex II, CII), ubiquinol-cytochrome c oxidoreductase (cytochrome b-c1 complex, complex III, CIII) and cytochrome c oxidase (complex IV, CIV), that cooperate to transfer electrons derived from NADH and succinate to molecular oxygen, creating an electrochemical gradient over the inner membrane that drives transmembrane transport and the ATP synthase. Cytochrome c oxidase is the component of the respiratory chain that catalyzes the reduction of oxygen to water. Electrons originating from reduced cytochrome c in the intermembrane space (IMS) are transferred via the dinuclear copper A center (CU(A)) of subunit 2 and heme A of subunit 1 to the active site in subunit 1, a binuclear center (BNC) formed by heme A3 and copper B (CU(B)). The BNC reduces molecular oxygen to 2 water molecules using 4 electrons from cytochrome c in the IMS and 4 protons from the mitochondrial matrix. The sequence is that of Cytochrome c oxidase subunit 2 (MT-CO2) from Sus scrofa (Pig).